Reading from the N-terminus, the 168-residue chain is Disulfide bond formation protein B 2 (168 aa).

Residues 1-14 are Cytoplasmic-facing; it reads MSAPIGATRAERWT. A helical membrane pass occupies residues 15 to 31; that stretch reads LLAIGVASFELVAGALW. Topologically, residues 32 to 49 are periplasmic; the sequence is IQLAWQEDPCPLCIIQRY. Residues Cys-41 and Cys-44 are joined by a disulfide bond. Residues 50 to 64 form a helical membrane-spanning segment; the sequence is LFLLIALFTFVAAAG. Topologically, residues 65 to 69 are cytoplasmic; it reads GRRVA. A helical transmembrane segment spans residues 70–87; it reads LLRVLSLTTALAGAAVAV. At 88–142 the chain is on the periplasmic side; the sequence is RHIYVQAHPGFSCGFDALQPVIDSLPPAHWLPPVFKVGGLCETLYPPILGLSLPM. Cys-100 and Cys-128 are oxidised to a cystine. Residues 143 to 161 traverse the membrane as a helical segment; sequence WALVGFSAIAVALGWRIRA. Over 162–168 the chain is Cytoplasmic; sequence QAVIRTA.

This sequence belongs to the DsbB family.

It localises to the cell inner membrane. Required for disulfide bond formation in some periplasmic proteins. Acts by oxidizing the DsbA protein. The protein is Disulfide bond formation protein B 2 of Burkholderia lata (strain ATCC 17760 / DSM 23089 / LMG 22485 / NCIMB 9086 / R18194 / 383).